The sequence spans 655 residues: Import motor subunit, mitochondrial (655 aa).

A mitochondrion-targeting transit peptide spans 1 to 23 (MLAAKNILNRSSLSSSFRIATRL). Threonine 330 is subject to Phosphothreonine. The disordered stretch occupies residues 629–655 (EQLYKNDSNNNNNNNNGNNAESDETKQ). Residues 637–647 (NNNNNNNNGNN) are compositionally biased toward low complexity.

The protein belongs to the heat shock protein 70 family. In terms of assembly, component of the PAM complex, at least composed of SSC1 (mtHsp70), MGE1, TIM44, PAM16/TIM16, PAM17 and PAM18/TIM14. In the complex, SSC1 interacts directly with PAM18 and TIM44. Interacts with NAP1. Component of endonuclease SceI (endo.SceI), which is a heterodimer of ENS2 and SSC1.

It localises to the mitochondrion matrix. The enzyme catalyses ATP + H2O = ADP + phosphate + H(+). In terms of biological role, essential component of the PAM complex, a complex required for the translocation of transit peptide-containing proteins from the inner membrane into the mitochondrial matrix in an ATP-dependent manner. Constitutes the ATP-driven core of the motor and binds the precursor preprotein. Required for the import of the processed frataxin homolog YFH1 into the mitochondrion. Acts as a non-catalytic component of endonuclease SceI (endo.SceI), which cleaves specifically at multiple sites on mitochondrial DNA and produces double-stranded breaks. SSC1 confers broader sequence specificity, greater stability, and higher activity on the catalytic subunit. The sequence is that of Import motor subunit, mitochondrial from Saccharomyces cerevisiae (Baker's yeast).